Here is a 501-residue protein sequence, read N- to C-terminus: Glucans biosynthesis protein G (501 aa).

The first 24 residues, 1–24 (MNRRQVLAALAAIPLLPEAFPANA), serve as a signal peptide directing secretion.

It belongs to the OpgD/OpgG family.

The protein localises to the periplasm. It participates in glycan metabolism; osmoregulated periplasmic glucan (OPG) biosynthesis. In terms of biological role, involved in the biosynthesis of osmoregulated periplasmic glucans (OPGs). This chain is Glucans biosynthesis protein G, found in Rhodopseudomonas palustris (strain BisA53).